The sequence spans 610 residues: Alpha-fetoprotein (610 aa).

A signal peptide spans 1–18 (MKWVVSFFLLFLLNFSDS). Albumin domains lie at 19–210 (RTMH…TSIT), 211–403 (KELR…EELE), and 404–602 (KYIQ…ALIS). Histidine 22 lines the Cu(2+) pocket. Disulfide bonds link cysteine 99/cysteine 114, cysteine 113/cysteine 124, cysteine 148/cysteine 193, cysteine 192/cysteine 201, cysteine 224/cysteine 270, cysteine 269/cysteine 277, cysteine 289/cysteine 303, and cysteine 302/cysteine 314. 2 positions are modified to phosphoserine: serine 111 and serine 115. N-linked (GlcNAc...) asparagine glycans are attached at residues asparagine 197 and asparagine 251. Serine 345 is modified (phosphoserine). 7 disulfide bridges follow: cysteine 385-cysteine 394, cysteine 417-cysteine 463, cysteine 462-cysteine 473, cysteine 486-cysteine 502, cysteine 501-cysteine 512, cysteine 539-cysteine 584, and cysteine 583-cysteine 592. Serine 445 carries the phosphoserine modification.

Belongs to the ALB/AFP/VDB family. In terms of assembly, dimeric and trimeric forms have been found in addition to the monomeric form. In terms of processing, sulfated. As to expression, plasma.

Its subcellular location is the secreted. Binds copper, nickel, and fatty acids as well as, and bilirubin less well than, serum albumin. The chain is Alpha-fetoprotein (AFP) from Bos taurus (Bovine).